Here is a 196-residue protein sequence, read N- to C-terminus: Histone H1.0 (196 aa).

2 disordered regions span residues Met1–Ser29 and Ser78–Lys196. An H15 domain is found at Asp24–Lys97. The segment covering Pro104–Lys196 has biased composition (basic residues).

This sequence belongs to the histone H1/H5 family.

The protein resides in the nucleus. It is found in the chromosome. Its function is as follows. Histones H1 are necessary for the condensation of nucleosome chains into higher-order structures. The histones H1.0 are found in cells that are in terminal stages of differentiation or that have low rates of cell division. This Xenopus tropicalis (Western clawed frog) protein is Histone H1.0 (h1-0).